The sequence spans 128 residues: 3-aminoacrylate deaminase RutC (128 aa).

The protein belongs to the RutC family. In terms of assembly, homotrimer.

The catalysed reaction is (Z)-3-aminoacrylate + H2O + H(+) = 3-oxopropanoate + NH4(+). Its function is as follows. Involved in pyrimidine catabolism. Catalyzes the deamination of 3-aminoacrylate to malonic semialdehyde, a reaction that can also occur spontaneously. RutC may facilitate the reaction and modulate the metabolic fitness, rather than catalyzing essential functions. This Shigella flexneri serotype X (strain 2002017) protein is 3-aminoacrylate deaminase RutC.